The primary structure comprises 444 residues: Elongation factor 1-alpha (444 aa).

Residues 15-236 (KPHLNLAVIG…ALDTFQPPPR (222 aa)) form the tr-type G domain. Residues 24-31 (GHVDNGKS) form a G1 region. A GTP-binding site is contributed by 24–31 (GHVDNGKS). S31 contributes to the Mg(2+) binding site. The G2 stretch occupies residues 80–84 (GVTIE). The tract at residues 101–104 (DLPG) is G3. GTP-binding positions include 101 to 105 (DLPGH) and 163 to 166 (NKMD). The tract at residues 163-166 (NKMD) is G4. The segment at 202–204 (SAI) is G5.

Belongs to the TRAFAC class translation factor GTPase superfamily. Classic translation factor GTPase family. EF-Tu/EF-1A subfamily.

It localises to the cytoplasm. The catalysed reaction is GTP + H2O = GDP + phosphate + H(+). In terms of biological role, GTP hydrolase that promotes the GTP-dependent binding of aminoacyl-tRNA to the A-site of ribosomes during protein biosynthesis. This chain is Elongation factor 1-alpha, found in Pyrobaculum islandicum (strain DSM 4184 / JCM 9189 / GEO3).